We begin with the raw amino-acid sequence, 754 residues long: Endoribonuclease Dicer-like (754 aa).

Positions 132 to 251 (QLMCDAKRLS…LPPELCLLLP (120 aa)) constitute a PAZ domain. 2 consecutive RNase III domains span residues 298 to 418 (FAIT…TGPN) and 613 to 734 (AQTV…LACG). Positions 336, 404, 407, 649, 720, and 723 each coordinate Mn(2+).

Homodimer. The cofactor is Mg(2+). Mn(2+) is required as a cofactor.

In terms of biological role, involved in cleaving double-stranded RNA in the RNA interference (RNAi) pathway. It produces 21 to 23 bp dsRNAs (siRNAs) which target the selective destruction of homologous RNAs. The chain is Endoribonuclease Dicer-like from Giardia intestinalis (strain ATCC 50803 / WB clone C6) (Giardia lamblia).